We begin with the raw amino-acid sequence, 340 residues long: N-acetyl-gamma-glutamyl-phosphate reductase (340 aa).

Cysteine 146 is an active-site residue.

The protein belongs to the NAGSA dehydrogenase family. Type 1 subfamily.

It is found in the cytoplasm. The enzyme catalyses N-acetyl-L-glutamate 5-semialdehyde + phosphate + NADP(+) = N-acetyl-L-glutamyl 5-phosphate + NADPH + H(+). The protein operates within amino-acid biosynthesis; L-arginine biosynthesis; N(2)-acetyl-L-ornithine from L-glutamate: step 3/4. Catalyzes the NADPH-dependent reduction of N-acetyl-5-glutamyl phosphate to yield N-acetyl-L-glutamate 5-semialdehyde. This is N-acetyl-gamma-glutamyl-phosphate reductase from Streptococcus thermophilus (strain ATCC BAA-491 / LMD-9).